A 743-amino-acid chain; its full sequence is Putative pre-mRNA-splicing factor ATP-dependent RNA helicase DHX32 (743 aa).

N-acetylmethionine is present on methionine 1. The tract at residues 1–28 (MEEEGLECPNSSSEKRYFPESLDSSDGD) is disordered. The region spanning 72-238 (MENLLQNQIV…YGNVPVIEVK (167 aa)) is the Helicase ATP-binding domain. 85–92 (GDAKCGKS) serves as a coordination point for ATP. The DEAH box signature appears at 185–188 (DDIH).

Belongs to the DEAD box helicase family. DEAH subfamily. Expressed in lymphoid tissues (at protein level). Expressed in brain, heart, skeletal muscle, colon, thymus, spleen, kidney, liver, small intestine, placenta, lung, lymphoid tissues and blood leukocytes.

The protein localises to the nucleus. Its subcellular location is the mitochondrion. It catalyses the reaction ATP + H2O = ADP + phosphate + H(+). In Homo sapiens (Human), this protein is Putative pre-mRNA-splicing factor ATP-dependent RNA helicase DHX32 (DHX32).